Reading from the N-terminus, the 139-residue chain is Actin-depolymerizing factor 3 (139 aa).

Residues 7–139 (GVAVNDECML…SLDEIKDRAR (133 aa)) form the ADF-H domain.

Belongs to the actin-binding proteins ADF family. In terms of tissue distribution, expressed in all tissues except pollen.

Its subcellular location is the cytoplasm. Actin-depolymerizing protein. Severs actin filaments (F-actin) and binds to actin monomers. This is Actin-depolymerizing factor 3 (ADF3) from Zea mays (Maize).